The primary structure comprises 398 residues: Phosphoglycerate kinase (398 aa).

Residues aspartate 21–asparagine 23, arginine 36, histidine 59–arginine 62, arginine 119, and arginine 157 each bind substrate. ATP is bound by residues lysine 208, glycine 296, glutamate 327, and glycine 354–serine 357.

Belongs to the phosphoglycerate kinase family. As to quaternary structure, monomer.

The protein localises to the cytoplasm. It carries out the reaction (2R)-3-phosphoglycerate + ATP = (2R)-3-phospho-glyceroyl phosphate + ADP. It participates in carbohydrate degradation; glycolysis; pyruvate from D-glyceraldehyde 3-phosphate: step 2/5. The polypeptide is Phosphoglycerate kinase (Streptococcus pyogenes serotype M5 (strain Manfredo)).